We begin with the raw amino-acid sequence, 310 residues long: Protein N-terminal asparagine amidohydrolase (310 aa).

Monomer.

The protein resides in the cytoplasm. The catalysed reaction is N-terminal L-asparaginyl-[protein] + H2O + H(+) = N-terminal L-aspartyl-[protein] + NH4(+). N-terminal asparagine deamidase that mediates deamidation of N-terminal asparagine residues to aspartate. Required for the ubiquitin-dependent turnover of intracellular proteins that initiate with Met-Asn. These proteins are acetylated on the retained initiator methionine and can subsequently be modified by the removal of N-acetyl methionine by acylaminoacid hydrolase (AAH). Conversion of the resulting N-terminal asparagine to aspartate by NTAN1/PNAD renders the protein susceptible to arginylation, polyubiquitination and degradation as specified by the N-end rule. This enzyme does not act on substrates with internal or C-terminal asparagines and does not act on glutamine residues in any position. The protein is Protein N-terminal asparagine amidohydrolase of Mus musculus (Mouse).